The primary structure comprises 1070 residues: DNA-directed RNA polymerase subunit beta (1070 aa).

Belongs to the RNA polymerase beta chain family. As to quaternary structure, in plastids the minimal PEP RNA polymerase catalytic core is composed of four subunits: alpha, beta, beta', and beta''. When a (nuclear-encoded) sigma factor is associated with the core the holoenzyme is formed, which can initiate transcription.

Its subcellular location is the plastid. The protein localises to the chloroplast. The catalysed reaction is RNA(n) + a ribonucleoside 5'-triphosphate = RNA(n+1) + diphosphate. In terms of biological role, DNA-dependent RNA polymerase catalyzes the transcription of DNA into RNA using the four ribonucleoside triphosphates as substrates. This is DNA-directed RNA polymerase subunit beta from Nandina domestica (Heavenly bamboo).